A 328-amino-acid chain; its full sequence is Probable voltage-gated potassium channel subunit beta (328 aa).

Trp-21, Gln-27, and Asp-49 together coordinate NADP(+). Tyr-54 serves as the catalytic Proton donor/acceptor. Residues Ser-152, Gln-178, Trp-207, Ser-208, Pro-209, Leu-210, Ala-211, Lys-218, Arg-229, Gly-285, Thr-287, Gln-291, Glu-294, and Asn-295 each coordinate NADP(+).

This sequence belongs to the shaker potassium channel beta subunit family. In terms of assembly, forms heteromultimeric complexes with potassium channel alpha subunits. As to expression, expressed in late-developed leaves with the highest expression in the flag leaf (at protein level).

Its function is as follows. Probable accessory potassium channel protein which modulates the activity of the pore-forming alpha subunit. This is Probable voltage-gated potassium channel subunit beta (KOB1) from Oryza sativa subsp. japonica (Rice).